The following is a 144-amino-acid chain: Effector EagT6 (144 aa).

As to quaternary structure, homodimer. Two dimers interact with Tse6; this interaction is crucial for Tse6 loading onto VgrG1a.

Its function is as follows. Plays an essential role in toxin Tse6 delivery to target cells and specifically in the loading of Tse6 onto VgrG1a. In Pseudomonas aeruginosa (strain ATCC 15692 / DSM 22644 / CIP 104116 / JCM 14847 / LMG 12228 / 1C / PRS 101 / PAO1), this protein is Effector EagT6.